The following is a 268-amino-acid chain: MERYENLFAQLNDRREGAFVPFVTLGDPGIEQSLKIIDTLIDSGADALELGVPFSDPLADGPTIQNANLRAFAAGVTPAQCFEMLALIREKHPTIPIGLLMYANLVFNNGIDAFYARCEQVGVDSVLVADVPVEESAPFRQAALRHNIAPIFICPPNADDDLLRQVASYGRGYTYLLSRSGVTGAENRGALPLHHLIEKLKEYHAAPALQGFGISSPEQVSAAVRAGAAGAISGSAIVKIIEKNLASPEQMLAELRSFVSAMKAASRA.

Residues Glu49 and Asp60 each act as proton acceptor in the active site.

It belongs to the TrpA family. In terms of assembly, tetramer of two alpha and two beta chains.

The catalysed reaction is (1S,2R)-1-C-(indol-3-yl)glycerol 3-phosphate + L-serine = D-glyceraldehyde 3-phosphate + L-tryptophan + H2O. It functions in the pathway amino-acid biosynthesis; L-tryptophan biosynthesis; L-tryptophan from chorismate: step 5/5. In terms of biological role, the alpha subunit is responsible for the aldol cleavage of indoleglycerol phosphate to indole and glyceraldehyde 3-phosphate. In Salmonella choleraesuis (strain SC-B67), this protein is Tryptophan synthase alpha chain.